The primary structure comprises 34 residues: Dermaseptin-H5 (34 aa).

Expressed by the skin glands.

Its subcellular location is the secreted. Functionally, has antimicrobial activity. In Pithecopus hypochondrialis (Orange-legged leaf frog), this protein is Dermaseptin-H5.